Consider the following 185-residue polypeptide: Elongation factor P (185 aa).

This sequence belongs to the elongation factor P family.

It is found in the cytoplasm. Its pathway is protein biosynthesis; polypeptide chain elongation. Functionally, involved in peptide bond synthesis. Stimulates efficient translation and peptide-bond synthesis on native or reconstituted 70S ribosomes in vitro. Probably functions indirectly by altering the affinity of the ribosome for aminoacyl-tRNA, thus increasing their reactivity as acceptors for peptidyl transferase. The polypeptide is Elongation factor P (Caldanaerobacter subterraneus subsp. tengcongensis (strain DSM 15242 / JCM 11007 / NBRC 100824 / MB4) (Thermoanaerobacter tengcongensis)).